Here is a 692-residue protein sequence, read N- to C-terminus: Elongation factor G (692 aa).

A tr-type G domain is found at 8-282 (ENTRNIGIMA…AVIDYLPSPL (275 aa)). GTP contacts are provided by residues 17–24 (AHIDAGKT), 81–85 (DTPGH), and 135–138 (NKMD).

It belongs to the TRAFAC class translation factor GTPase superfamily. Classic translation factor GTPase family. EF-G/EF-2 subfamily.

Its subcellular location is the cytoplasm. Catalyzes the GTP-dependent ribosomal translocation step during translation elongation. During this step, the ribosome changes from the pre-translocational (PRE) to the post-translocational (POST) state as the newly formed A-site-bound peptidyl-tRNA and P-site-bound deacylated tRNA move to the P and E sites, respectively. Catalyzes the coordinated movement of the two tRNA molecules, the mRNA and conformational changes in the ribosome. This is Elongation factor G from Bacillus thuringiensis subsp. konkukian (strain 97-27).